Here is an 853-residue protein sequence, read N- to C-terminus: A-kinase anchor protein 3 (853 aa).

The PKA-RII subunit binding domain stretch occupies residues V124–A137. The tract at residues R188–F240 is disordered. S205 and S208 each carry phosphoserine. Positions K219–P235 are enriched in basic and acidic residues. S403 is subject to Phosphoserine. The residue at position 404 (Y404) is a Phosphotyrosine. A phosphoserine mark is found at S635 and S636.

This sequence belongs to the AKAP110 family. In terms of assembly, interacts with ROPN1 and ROPN1L. Interacts with QRICH2. Phosphorylated by STK33 during sperm flagella assembly. Phosphorylated on tyrosine residues. Testis specific; only expressed in spermatids.

It is found in the cytoplasmic vesicle. The protein localises to the secretory vesicle. It localises to the acrosome. The protein resides in the cell projection. Its subcellular location is the cilium. It is found in the flagellum. Functionally, structural component of sperm fibrous sheath. Required for the formation of the subcellular structure of the sperm flagellum, sperm motility and male fertility. This is A-kinase anchor protein 3 from Homo sapiens (Human).